The sequence spans 221 residues: Sigma non-opioid intracellular receptor 1 (221 aa).

Topologically, residues 1-4 are lumenal; sequence MALW. The chain crosses the membrane as a helical span at residues 5 to 27; sequence RGLRAVLAVAGLAVAVQLLRGWL. At 28-221 the chain is on the cytoplasmic side; that stretch reads GSKSYVFNRE…STHLSELGFF (194 aa). The interval 96–103 is important for ligand-binding; it reads SLTEYVLL. The segment at 174–221 is C-terminal hydrophobic region; the sequence is FIPSTLGFALADTIFSTQDFLTLFYTVKVYGKALLLETSTHLSELGFF.

It belongs to the ERG2 family. In terms of assembly, homotrimer.

It localises to the nucleus inner membrane. The protein resides in the nucleus outer membrane. Its subcellular location is the nucleus envelope. The protein localises to the cytoplasmic vesicle. It is found in the endoplasmic reticulum membrane. It localises to the membrane. Its function is as follows. May function in lipid transport from the endoplasmic reticulum and be involved in a wide array of cellular functions probably through regulation of the biogenesis of lipid microdomains at the plasma membrane. May regulate calcium efflux at the endoplasmic reticulum. This chain is Sigma non-opioid intracellular receptor 1 (sigmar1), found in Xenopus tropicalis (Western clawed frog).